Reading from the N-terminus, the 220-residue chain is Mediator of RNA polymerase II transcription subunit 7 (220 aa).

This sequence belongs to the Mediator complex subunit 7 family. Component of the Mediator complex. Interacts with MED21.

The protein localises to the nucleus. Functionally, component of the Mediator complex, a coactivator involved in the regulated transcription of nearly all RNA polymerase II-dependent genes. Mediator functions as a bridge to convey information from gene-specific regulatory proteins to the basal RNA polymerase II transcription machinery. Mediator is recruited to promoters by direct interactions with regulatory proteins and serves as a scaffold for the assembly of a functional preinitiation complex with RNA polymerase II and the general transcription factors. Required for activated transcription of the MtnA, MtnB and MtnD genes. In Drosophila melanogaster (Fruit fly), this protein is Mediator of RNA polymerase II transcription subunit 7 (MED7).